Here is a 268-residue protein sequence, read N- to C-terminus: MEMO1 family protein Ta0237 (268 aa).

This sequence belongs to the MEMO1 family.

In Thermoplasma acidophilum (strain ATCC 25905 / DSM 1728 / JCM 9062 / NBRC 15155 / AMRC-C165), this protein is MEMO1 family protein Ta0237.